Reading from the N-terminus, the 360-residue chain is Histidinol-phosphate aminotransferase (360 aa).

Position 221 is an N6-(pyridoxal phosphate)lysine (K221).

Belongs to the class-II pyridoxal-phosphate-dependent aminotransferase family. Histidinol-phosphate aminotransferase subfamily. As to quaternary structure, homodimer. Requires pyridoxal 5'-phosphate as cofactor.

It catalyses the reaction L-histidinol phosphate + 2-oxoglutarate = 3-(imidazol-4-yl)-2-oxopropyl phosphate + L-glutamate. Its pathway is amino-acid biosynthesis; L-histidine biosynthesis; L-histidine from 5-phospho-alpha-D-ribose 1-diphosphate: step 7/9. This is Histidinol-phosphate aminotransferase from Desulfitobacterium hafniense (strain Y51).